We begin with the raw amino-acid sequence, 383 residues long: Chorismate synthase (383 aa).

Residues Arg39 and Arg45 each coordinate NADP(+). FMN-binding positions include 128–130, Gly291, 306–310, and Arg332; these read RAS and KPIAT.

It belongs to the chorismate synthase family. Homotetramer. It depends on FMNH2 as a cofactor.

The enzyme catalyses 5-O-(1-carboxyvinyl)-3-phosphoshikimate = chorismate + phosphate. The protein operates within metabolic intermediate biosynthesis; chorismate biosynthesis; chorismate from D-erythrose 4-phosphate and phosphoenolpyruvate: step 7/7. In terms of biological role, catalyzes the anti-1,4-elimination of the C-3 phosphate and the C-6 proR hydrogen from 5-enolpyruvylshikimate-3-phosphate (EPSP) to yield chorismate, which is the branch point compound that serves as the starting substrate for the three terminal pathways of aromatic amino acid biosynthesis. This reaction introduces a second double bond into the aromatic ring system. In Thermus thermophilus (strain ATCC 27634 / DSM 579 / HB8), this protein is Chorismate synthase.